Consider the following 177-residue polypeptide: Large ribosomal subunit protein uL6 (177 aa).

Belongs to the universal ribosomal protein uL6 family. In terms of assembly, part of the 50S ribosomal subunit.

Its function is as follows. This protein binds to the 23S rRNA, and is important in its secondary structure. It is located near the subunit interface in the base of the L7/L12 stalk, and near the tRNA binding site of the peptidyltransferase center. In Chelativorans sp. (strain BNC1), this protein is Large ribosomal subunit protein uL6.